The chain runs to 60 residues: DNA-binding protein 7c (60 aa).

The tract at residues 37–60 (DNGKTGRGAVSEKDAPKELLEKLK) is disordered. The span at 46–60 (VSEKDAPKELLEKLK) shows a compositional bias: basic and acidic residues.

It belongs to the 7 kDa DNA-binding/endoribonuclease P2 family. Monomer.

The protein localises to the cytoplasm. Functionally, can constrain negative DNA supercoils. May be involved in maintaining the integrity of the genome at high temperature. The protein is DNA-binding protein 7c of Acidianus hospitalis (strain W1).